We begin with the raw amino-acid sequence, 129 residues long: uncharacterized protein (129 aa).

The disordered stretch occupies residues 34-57; the sequence is SAPLRPPRELHAAPPPATPTQTVV.

This is an uncharacterized protein from Homo sapiens (Human).